Consider the following 253-residue polypeptide: MAYKYDRDLEFLKQLESSDLLDLFEVLVFGKDGEKRHNEKLTSSIEYKRHGDDYAKYAERIAEELQYYGSNSFASFIKGEGVLYKEILCDVCDKLKVNYNKKTETTLIEQNMLSKILERSLEEMDDEEVKEMCDELSIKNTDNLNRQALSAATLTLFKMGGFKSYQLAVIVANAVAKTILGRGLSLAGNQVLTRTLSFLTGPVGWIITGVWTAIDIAGPAYRVTIPACIVVATLRLKTQQANEDKKSLQIESV.

The protein belongs to the UPF0174 family.

This chain is UPF0174 protein jhp_1494, found in Helicobacter pylori (strain J99 / ATCC 700824) (Campylobacter pylori J99).